A 79-amino-acid polypeptide reads, in one-letter code: Delta-hormotoxin-Cpt1b (79 aa).

A signal peptide spans 1–20 (MKTQVLALFVLCVLFCLAES). A propeptide spanning residues 21-31 (RTTLNKRNDIE) is cleaved from the precursor. Disulfide bonds link C36/C75, C38/C66, and C56/C76.

This sequence belongs to the sea anemone sodium channel inhibitory toxin family.

Its subcellular location is the secreted. The protein resides in the nematocyst. Its function is as follows. In neuromuscular preparation of crustaceans, the toxin increased neurotransmitter release, causing repetitive firing of the axons. May affect sodium channels (Nav). The chain is Delta-hormotoxin-Cpt1b from Calliactis parasitica (Sea anemone).